The chain runs to 446 residues: Bifunctional protein GlmU (446 aa).

Positions Met-1–Arg-229 are pyrophosphorylase. Residues Leu-11–Gly-14, Lys-25, Gln-78, Gly-83–Thr-84, Tyr-106–Asp-108, Gly-141, Glu-155, Asn-170, and Asn-227 each bind UDP-N-acetyl-alpha-D-glucosamine. Asp-108 is a binding site for Mg(2+). Asn-227 serves as a coordination point for Mg(2+). Residues Ala-230–Asp-250 form a linker region. Residues Gly-251 to Asn-446 form an N-acetyltransferase region. Positions 316 and 334 each coordinate UDP-N-acetyl-alpha-D-glucosamine. His-346 serves as the catalytic Proton acceptor. UDP-N-acetyl-alpha-D-glucosamine contacts are provided by Tyr-349 and Asn-360. Acetyl-CoA is bound by residues Ala-363, Asn-369 to Tyr-370, Ser-388, Ser-406, and Arg-423.

In the N-terminal section; belongs to the N-acetylglucosamine-1-phosphate uridyltransferase family. This sequence in the C-terminal section; belongs to the transferase hexapeptide repeat family. In terms of assembly, homotrimer. Requires Mg(2+) as cofactor.

It is found in the cytoplasm. It catalyses the reaction alpha-D-glucosamine 1-phosphate + acetyl-CoA = N-acetyl-alpha-D-glucosamine 1-phosphate + CoA + H(+). The enzyme catalyses N-acetyl-alpha-D-glucosamine 1-phosphate + UTP + H(+) = UDP-N-acetyl-alpha-D-glucosamine + diphosphate. Its pathway is nucleotide-sugar biosynthesis; UDP-N-acetyl-alpha-D-glucosamine biosynthesis; N-acetyl-alpha-D-glucosamine 1-phosphate from alpha-D-glucosamine 6-phosphate (route II): step 2/2. It functions in the pathway nucleotide-sugar biosynthesis; UDP-N-acetyl-alpha-D-glucosamine biosynthesis; UDP-N-acetyl-alpha-D-glucosamine from N-acetyl-alpha-D-glucosamine 1-phosphate: step 1/1. The protein operates within bacterial outer membrane biogenesis; LPS lipid A biosynthesis. Its function is as follows. Catalyzes the last two sequential reactions in the de novo biosynthetic pathway for UDP-N-acetylglucosamine (UDP-GlcNAc). The C-terminal domain catalyzes the transfer of acetyl group from acetyl coenzyme A to glucosamine-1-phosphate (GlcN-1-P) to produce N-acetylglucosamine-1-phosphate (GlcNAc-1-P), which is converted into UDP-GlcNAc by the transfer of uridine 5-monophosphate (from uridine 5-triphosphate), a reaction catalyzed by the N-terminal domain. The polypeptide is Bifunctional protein GlmU (Paracoccus denitrificans (strain Pd 1222)).